The primary structure comprises 456 residues: Putative gluconeogenesis factor (456 aa).

This sequence belongs to the gluconeogenesis factor family.

It localises to the cytoplasm. Functionally, required for morphogenesis under gluconeogenic growth conditions. The chain is Putative gluconeogenesis factor from Nostoc sp. (strain PCC 7120 / SAG 25.82 / UTEX 2576).